We begin with the raw amino-acid sequence, 474 residues long: tRNA-2-methylthio-N(6)-dimethylallyladenosine synthase (474 aa).

The 118-residue stretch at 3–120 (QKLHIKTWGC…LPEMINQIRG (118 aa)) folds into the MTTase N-terminal domain. Positions 12, 49, 83, 157, 161, and 164 each coordinate [4Fe-4S] cluster. The Radical SAM core domain occupies 143–375 (RAEGPTAFVS…QQRINNQAAQ (233 aa)). Residues 378–441 (RAMLGTEQRV…TNSLRGEVVR (64 aa)) form the TRAM domain.

This sequence belongs to the methylthiotransferase family. MiaB subfamily. As to quaternary structure, monomer. Requires [4Fe-4S] cluster as cofactor.

Its subcellular location is the cytoplasm. It catalyses the reaction N(6)-dimethylallyladenosine(37) in tRNA + (sulfur carrier)-SH + AH2 + 2 S-adenosyl-L-methionine = 2-methylsulfanyl-N(6)-dimethylallyladenosine(37) in tRNA + (sulfur carrier)-H + 5'-deoxyadenosine + L-methionine + A + S-adenosyl-L-homocysteine + 2 H(+). In terms of biological role, catalyzes the methylthiolation of N6-(dimethylallyl)adenosine (i(6)A), leading to the formation of 2-methylthio-N6-(dimethylallyl)adenosine (ms(2)i(6)A) at position 37 in tRNAs that read codons beginning with uridine. The chain is tRNA-2-methylthio-N(6)-dimethylallyladenosine synthase from Pasteurella multocida (strain Pm70).